A 74-amino-acid polypeptide reads, in one-letter code: Ribosome modulation factor (74 aa).

Belongs to the ribosome modulation factor family.

The protein resides in the cytoplasm. Functionally, during stationary phase, converts 70S ribosomes to an inactive dimeric form (100S ribosomes). The polypeptide is Ribosome modulation factor (Cellvibrio japonicus (strain Ueda107) (Pseudomonas fluorescens subsp. cellulosa)).